The sequence spans 225 residues: PKHD-type hydroxylase YbiX (225 aa).

Residues 78–177 enclose the Fe2OG dioxygenase domain; the sequence is TLSTPLFNRY…RVASFMWIQS (100 aa). Fe cation is bound by residues His-96, Asp-98, and His-158. Arg-168 is a binding site for 2-oxoglutarate.

Fe(2+) serves as cofactor. The cofactor is L-ascorbate.

The chain is PKHD-type hydroxylase YbiX from Escherichia coli O6:H1 (strain CFT073 / ATCC 700928 / UPEC).